The sequence spans 298 residues: GTP cyclohydrolase FolE2 (298 aa).

This sequence belongs to the GTP cyclohydrolase IV family.

The catalysed reaction is GTP + H2O = 7,8-dihydroneopterin 3'-triphosphate + formate + H(+). It functions in the pathway cofactor biosynthesis; 7,8-dihydroneopterin triphosphate biosynthesis; 7,8-dihydroneopterin triphosphate from GTP: step 1/1. Functionally, converts GTP to 7,8-dihydroneopterin triphosphate. This chain is GTP cyclohydrolase FolE2, found in Neisseria meningitidis serogroup B (strain ATCC BAA-335 / MC58).